Reading from the N-terminus, the 238-residue chain is Pyridoxine 5'-phosphate synthase (238 aa).

The 3-amino-2-oxopropyl phosphate site is built by Asn7 and Arg18. His43 (proton acceptor) is an active-site residue. 1-deoxy-D-xylulose 5-phosphate-binding residues include Arg45 and His50. Glu70 acts as the Proton acceptor in catalysis. 1-deoxy-D-xylulose 5-phosphate is bound at residue Thr100. The Proton donor role is filled by His190. 3-amino-2-oxopropyl phosphate-binding positions include Asp191 and 213 to 214 (GH).

It belongs to the PNP synthase family. Homooctamer; tetramer of dimers.

It localises to the cytoplasm. The enzyme catalyses 3-amino-2-oxopropyl phosphate + 1-deoxy-D-xylulose 5-phosphate = pyridoxine 5'-phosphate + phosphate + 2 H2O + H(+). It functions in the pathway cofactor biosynthesis; pyridoxine 5'-phosphate biosynthesis; pyridoxine 5'-phosphate from D-erythrose 4-phosphate: step 5/5. Its function is as follows. Catalyzes the complicated ring closure reaction between the two acyclic compounds 1-deoxy-D-xylulose-5-phosphate (DXP) and 3-amino-2-oxopropyl phosphate (1-amino-acetone-3-phosphate or AAP) to form pyridoxine 5'-phosphate (PNP) and inorganic phosphate. This is Pyridoxine 5'-phosphate synthase from Porphyromonas gingivalis (strain ATCC 33277 / DSM 20709 / CIP 103683 / JCM 12257 / NCTC 11834 / 2561).